Reading from the N-terminus, the 354-residue chain is tRNA-specific 2-thiouridylase MnmA (354 aa).

ATP-binding positions include 6–13 (LLSGGVDS) and Leu33. Cys100 (nucleophile) is an active-site residue. Cys100 and Cys195 are disulfide-bonded. An ATP-binding site is contributed by Gly123. Positions 145 to 147 (KDQ) are interaction with tRNA. Residue Cys195 is the Cysteine persulfide intermediate of the active site.

This sequence belongs to the MnmA/TRMU family.

It localises to the cytoplasm. The catalysed reaction is S-sulfanyl-L-cysteinyl-[protein] + uridine(34) in tRNA + AH2 + ATP = 2-thiouridine(34) in tRNA + L-cysteinyl-[protein] + A + AMP + diphosphate + H(+). Catalyzes the 2-thiolation of uridine at the wobble position (U34) of tRNA, leading to the formation of s(2)U34. This Borrelia recurrentis (strain A1) protein is tRNA-specific 2-thiouridylase MnmA.